The primary structure comprises 221 residues: Epididymal secretory glutathione peroxidase (221 aa).

The signal sequence occupies residues 1–21; it reads MTAWLGASYVLPILLVSFVQT. Cys73 is a catalytic residue.

It belongs to the glutathione peroxidase family. In terms of tissue distribution, epididymis.

It is found in the secreted. It catalyses the reaction 2 glutathione + H2O2 = glutathione disulfide + 2 H2O. Functionally, protects cells and enzymes from oxidative damage, by catalyzing the reduction of hydrogen peroxide, lipid peroxides and organic hydroperoxide, by glutathione. May constitute a glutathione peroxidase-like protective system against peroxide damage in sperm membrane lipids. The chain is Epididymal secretory glutathione peroxidase (GPX5) from Canis lupus familiaris (Dog).